The following is a 302-amino-acid chain: Recombination-associated protein RdgC (302 aa).

This sequence belongs to the RdgC family.

It is found in the cytoplasm. It localises to the nucleoid. In terms of biological role, may be involved in recombination. The protein is Recombination-associated protein RdgC of Xanthomonas campestris pv. campestris (strain 8004).